Consider the following 496-residue polypeptide: RNA-binding motif protein, Y chromosome, family 1 member E (496 aa).

One can recognise an RRM domain in the interval 8 to 85; the sequence is GKLFIGGLNR…KAIKVEQAKK (78 aa). Disordered stretches follow at residues 67–348 and 453–496; these read DMNG…PHRD and DQRN…SSRY. 2 stretches are compositionally biased toward low complexity: residues 97-114 and 149-159; these read PASS…SARG and PVKRGPSSRSG. Over residues 175–184 the composition is skewed to polar residues; the sequence is NSWMGSQGPM. 6 stretches are compositionally biased toward basic and acidic residues: residues 204–214, 242–253, 276–289, 313–326, 335–348, and 484–496; these read RNDRMSTRHDG, DNGHSNRDEHSS, AYRD…DESY, GYRD…HESY, SSRE…PHRD, and GESR…SSRY.

Interacts with splicing factor proteins SFRS3/SRP20, TRA2B/SFRS10, KHDRBS1/SAM68 and KHDRBS3. Testis-specific.

It is found in the nucleus. Its function is as follows. RNA-binding protein which may be involved in spermatogenesis. Required for sperm development, possibly by participating in pre-mRNA splicing in the testis. This Homo sapiens (Human) protein is RNA-binding motif protein, Y chromosome, family 1 member E (RBMY1E).